A 455-amino-acid polypeptide reads, in one-letter code: Ribosomal protein uS12 methylthiotransferase RimO (455 aa).

Residues Pro-30–Pro-140 form the MTTase N-terminal domain. 6 residues coordinate [4Fe-4S] cluster: Cys-39, Cys-75, Cys-104, Cys-171, Cys-175, and Cys-178. A Radical SAM core domain is found at Leu-157–Val-386. Residues Ala-389 to Val-455 enclose the TRAM domain.

It belongs to the methylthiotransferase family. RimO subfamily. [4Fe-4S] cluster is required as a cofactor.

The protein resides in the cytoplasm. The enzyme catalyses L-aspartate(89)-[ribosomal protein uS12]-hydrogen + (sulfur carrier)-SH + AH2 + 2 S-adenosyl-L-methionine = 3-methylsulfanyl-L-aspartate(89)-[ribosomal protein uS12]-hydrogen + (sulfur carrier)-H + 5'-deoxyadenosine + L-methionine + A + S-adenosyl-L-homocysteine + 2 H(+). Its function is as follows. Catalyzes the methylthiolation of an aspartic acid residue of ribosomal protein uS12. The sequence is that of Ribosomal protein uS12 methylthiotransferase RimO from Cereibacter sphaeroides (strain ATCC 17023 / DSM 158 / JCM 6121 / CCUG 31486 / LMG 2827 / NBRC 12203 / NCIMB 8253 / ATH 2.4.1.) (Rhodobacter sphaeroides).